A 113-amino-acid polypeptide reads, in one-letter code: Putative pterin-4-alpha-carbinolamine dehydratase (113 aa).

Belongs to the pterin-4-alpha-carbinolamine dehydratase family.

The catalysed reaction is (4aS,6R)-4a-hydroxy-L-erythro-5,6,7,8-tetrahydrobiopterin = (6R)-L-erythro-6,7-dihydrobiopterin + H2O. This Nitrosomonas eutropha (strain DSM 101675 / C91 / Nm57) protein is Putative pterin-4-alpha-carbinolamine dehydratase.